The chain runs to 328 residues: Bypass of stop codon protein 1 (328 aa).

Residues 1 to 155 form the Flo11 domain; sequence MSQQNILHYD…TYQCKGNNDG (155 aa). 2 disordered regions span residues 168–259 and 286–328; these read SSIT…VKSS and TSTD…DPTT. Residues 291–328 show a composition bias toward low complexity; that stretch reads TTLAASTSPFSSFTSSDSSSSSDVTSSTIQTTSVDPTT.

This chain is Bypass of stop codon protein 1 (BSC1), found in Saccharomyces cerevisiae (strain ATCC 204508 / S288c) (Baker's yeast).